Consider the following 414-residue polypeptide: Enterobactin exporter EntS (414 aa).

Residues 1-21 lie on the Cytoplasmic side of the membrane; the sequence is MNRQSWLLNLSLLKTHPAFRA. Residues 22–42 form a helical membrane-spanning segment; the sequence is VFLARFISIVSLGLLGVAVPV. Over 43–55 the chain is Periplasmic; the sequence is QIQMMTHSTWQVG. A helical membrane pass occupies residues 56 to 76; that stretch reads LSVTLTGGAMFIGLMVGGVLA. Residues 77 to 83 are Cytoplasmic-facing; sequence DRYERKK. The helical transmembrane segment at 84–104 threads the bilayer; it reads VILLARGTCGIGFIGLCVNAL. At 105–109 the chain is on the periplasmic side; the sequence is LPEPS. The helical transmembrane segment at 110-130 threads the bilayer; it reads LLAIYLLGLWDGFFASLGVTA. At 131 to 156 the chain is on the cytoplasmic side; that stretch reads LLAATPALVGRENLMQAGAITMLTVR. The helical transmembrane segment at 157 to 177 threads the bilayer; that stretch reads LGSVISPMLGGILLASGGVAW. Residue asparagine 178 is a topological domain, periplasmic. Residues 179–199 form a helical membrane-spanning segment; sequence YGLAAAGTFITLLPLLTLPRL. Residues 200–218 lie on the Cytoplasmic side of the membrane; it reads PVPPQPRENPFLALLAAFR. A helical membrane pass occupies residues 219 to 239; it reads FLLACPLIGGIALLGGLVTMA. Over 240–256 the chain is Periplasmic; the sequence is SAVRVLYPALAMSWQMS. Residues 257–277 traverse the membrane as a helical segment; sequence AAQIGLLYAAIPLGAAIGALT. Residues 278 to 287 lie on the Cytoplasmic side of the membrane; the sequence is SGQLAHSVRP. Residues 288-307 traverse the membrane as a helical segment; that stretch reads GLIMLVSTVGSFLAVGLFAI. Topologically, residues 308–313 are periplasmic; sequence MPVWIA. A helical transmembrane segment spans residues 314–336; sequence GVICLALFGWLSAISSLLQYTLL. Topologically, residues 337-356 are cytoplasmic; the sequence is QTQTPENMLGRMNGLWTAQN. The helical transmembrane segment at 357-377 threads the bilayer; it reads VTGDAIGAALLGGLGAMMTPV. Residue alanine 378 is a topological domain, periplasmic. The helical transmembrane segment at 379–399 threads the bilayer; that stretch reads SASVSGFGLVIIGLLLLLVLG. At 400–414 the chain is on the cytoplasmic side; sequence ELRRFRQTSPVSDAG.

The protein belongs to the major facilitator superfamily. EntS (TC 2.A.1.38) family.

The protein resides in the cell inner membrane. Functionally, component of an export pathway for enterobactin. This Salmonella paratyphi A (strain ATCC 9150 / SARB42) protein is Enterobactin exporter EntS.